Reading from the N-terminus, the 447-residue chain is Na(+)-translocating NADH-quinone reductase subunit A (447 aa).

The protein belongs to the NqrA family. In terms of assembly, composed of six subunits; NqrA, NqrB, NqrC, NqrD, NqrE and NqrF.

It catalyses the reaction a ubiquinone + n Na(+)(in) + NADH + H(+) = a ubiquinol + n Na(+)(out) + NAD(+). In terms of biological role, NQR complex catalyzes the reduction of ubiquinone-1 to ubiquinol by two successive reactions, coupled with the transport of Na(+) ions from the cytoplasm to the periplasm. NqrA to NqrE are probably involved in the second step, the conversion of ubisemiquinone to ubiquinol. This is Na(+)-translocating NADH-quinone reductase subunit A from Neisseria meningitidis serogroup B (strain ATCC BAA-335 / MC58).